Reading from the N-terminus, the 820-residue chain is Phospholipase D alpha 3 (820 aa).

In terms of domain architecture, C2 spans Met1 to Leu133. Asp194 lines the Ca(2+) pocket. Residues Thr334–Arg371 enclose the PLD phosphodiesterase 1 domain. Residues His339, Lys341, and Asp346 contribute to the active site. His339 provides a ligand contact to a 1,2-diacyl-sn-glycero-3-phosphate. Residues His377 and His411 each contribute to the Ca(2+) site. Gln528 and His667 together coordinate a 1,2-diacyl-sn-glycero-3-phosphate. In terms of domain architecture, PLD phosphodiesterase 2 spans Phe662–Ser689. Active-site residues include His667, Lys669, and Asp674. Residue Glu730 participates in Ca(2+) binding.

The protein belongs to the phospholipase D family. C2-PLD subfamily. It depends on Ca(2+) as a cofactor. As to expression, expressed in buds, flowers, siliques, stems, old leaves and roots. Expressed in the sieve elements.

The protein resides in the cytoplasm. It localises to the membrane. It carries out the reaction a 1,2-diacyl-sn-glycero-3-phosphocholine + H2O = a 1,2-diacyl-sn-glycero-3-phosphate + choline + H(+). In terms of biological role, hydrolyzes glycerol-phospholipids at the terminal phosphodiesteric bond to generate phosphatidic acids (PA). Active with phosphatidylcholine (PC), phosphatidylethanolamine (PE), phosphatidylglycerol (PG), and phosphatidylserine (PS) as substrates. No activity toward phosphatidylinositol (PI) or PIP2. Positively mediates plant responses to hyperosmotic stresses and promotes root growth, flowering, and stress avoidance. Not involved in the abscisic acid regulation of stomatal movement and transpirational water loss. The protein is Phospholipase D alpha 3 of Arabidopsis thaliana (Mouse-ear cress).